The chain runs to 62 residues: MYTFSYSTHNELLEFFHLFVTIQWLALIGQKTLSQFCLYRNAAVVGFFIRFTFGTPIFLQLL.

2 consecutive transmembrane segments (helical) span residues 9–29 (HNEL…ALIG) and 42–62 (AAVV…LQLL).

Its subcellular location is the membrane. This is an uncharacterized protein from Saccharomyces cerevisiae (strain ATCC 204508 / S288c) (Baker's yeast).